The primary structure comprises 110 residues: Disintegrin jerdostatin (110 aa).

The N-terminal stretch at 1 to 20 (MIQVLLVTICLAVFPYQVSS) is a signal peptide. A propeptide spanning residues 21–67 (KTLKSGSVNEYEVVNPGTVTGLPKGAVKQPEKKHEPMKGNTLQKLPL) is cleaved from the precursor. In terms of domain architecture, Disintegrin spans 27 to 110 (SVNEYEVVNP…CECPSYPGNG (84 aa)). 4 disulfides stabilise this stretch: cysteine 68/cysteine 77, cysteine 73/cysteine 96, cysteine 74/cysteine 101, and cysteine 86/cysteine 103. The short motif at 88–90 (RTS) is the Cell attachment site; atypical (RTS) element.

Belongs to the disintegrin family. Short disintegrin subfamily. As to quaternary structure, monomer. In terms of processing, two conformers are found, they may differ by their disulfide bond connectivities. Conformer 2 is 33 times less active than conformer 1. Conformer 2 may represent a non-native protein. The C-terminal dipeptide may be post-translationally removed, as seen in disintegrins that possess a KTS integrin-binding motif. As to expression, expressed by the venom gland.

It localises to the secreted. Its function is as follows. Recombinant protein inhibits the adhesion of alpha-1/beta-1-K562 (ITGA1/ITGB1) cells to collagen IV with an IC(50) of 80 nM. This chain is Disintegrin jerdostatin, found in Protobothrops jerdonii (Jerdon's pitviper).